The primary structure comprises 772 residues: PDZ domain-containing protein 4 (772 aa).

Residues 136-221 form the PDZ domain; that stretch reads EVELCKNSHQ…NISLLVARPE (86 aa). The tract at residues 239–320 is disordered; the sequence is DFGSENEGDL…TNTPGSLRKF (82 aa). S242 carries the phosphoserine modification. Basic and acidic residues predominate over residues 287–303; that stretch reads RTDESTRNEESSEHDLL. Residues 394–424 are a coiled coil; sequence VNRNESLGHEMAMLEEELRHLEFKCRNILRA. Residues 450–573 form a disordered region; sequence ASEPKKHELS…VGPEGSPYLS (124 aa). A compositionally biased stretch (basic and acidic residues) spans 452-472; that stretch reads EPKKHELSDISELPEKSDKDS. S459 is subject to Phosphoserine. Polar residues-rich tracts occupy residues 473–484 and 502–511; these read TSAYNTGESCRS and AGNSNLNRTP. Positions 535–552 are enriched in basic and acidic residues; the sequence is LSRDPEVGRRQHTEERVR.

The protein resides in the cytoplasm. It is found in the cell cortex. This chain is PDZ domain-containing protein 4 (Pdzd4), found in Mus musculus (Mouse).